The chain runs to 598 residues: Polypeptide N-acetylgalactosaminyltransferase 17 (598 aa).

Over 1–6 the chain is Cytoplasmic; that stretch reads MASLRR. The chain crosses the membrane as a helical; Signal-anchor for type II membrane protein span at residues 7 to 27; sequence VKVLLVLNLIAVAGFVIFLAK. Topologically, residues 28–598 are lumenal; sequence CRPIAVRSGD…QRWAIKNPIK (571 aa). N-linked (GlcNAc...) asparagine glycosylation is present at N50. 2 cysteine pairs are disulfide-bonded: C142/C373 and C364/C443. The catalytic subdomain A stretch occupies residues 151 to 262; that stretch reads LPQISIIFIF…AGWAEPVLSR (112 aa). 2 residues coordinate substrate: D192 and R223. Residues D246, H248, and H378 each contribute to the Mn(2+) site. The tract at residues 319–381 is catalytic subdomain B; that stretch reads PIRTPAMIGC…PCSRVAHIER (63 aa). Positions 381 and 386 each coordinate substrate. N-linked (GlcNAc...) asparagine glycosylation is found at N461 and N486. One can recognise a Ricin B-type lectin domain in the interval 465-594; it reads AYGELRNNKA…SCTGQRWAIK (130 aa). Intrachain disulfides connect C478-C494, C526-C541, and C568-C586.

This sequence belongs to the glycosyltransferase 2 family. GalNAc-T subfamily. Requires Mn(2+) as cofactor.

It localises to the golgi apparatus membrane. It carries out the reaction L-seryl-[protein] + UDP-N-acetyl-alpha-D-galactosamine = a 3-O-[N-acetyl-alpha-D-galactosaminyl]-L-seryl-[protein] + UDP + H(+). The catalysed reaction is L-threonyl-[protein] + UDP-N-acetyl-alpha-D-galactosamine = a 3-O-[N-acetyl-alpha-D-galactosaminyl]-L-threonyl-[protein] + UDP + H(+). Its pathway is protein modification; protein glycosylation. Functionally, may catalyze the initial reaction in O-linked oligosaccharide biosynthesis, the transfer of an N-acetyl-D-galactosamine residue to a serine or threonine residue on the protein receptor. This chain is Polypeptide N-acetylgalactosaminyltransferase 17, found in Mus musculus (Mouse).